The sequence spans 331 residues: Inactive serine/threonine-protein kinase BKN1 (331 aa).

Gly-2 is lipidated: N-myristoyl glycine. Cys-4 is lipidated: S-palmitoyl cysteine. Positions Asp-58–Glu-328 constitute a Protein kinase domain.

This sequence belongs to the protein kinase superfamily. Ser/Thr protein kinase family. Restricted to stigma in flowers.

It is found in the cell membrane. The protein resides in the nucleus. In terms of biological role, collaboratively with BKN2/SZE2, involved in compatible pollen-stigma interactions. The chain is Inactive serine/threonine-protein kinase BKN1 from Arabidopsis thaliana (Mouse-ear cress).